A 365-amino-acid polypeptide reads, in one-letter code: Probable receptor-like protein kinase At2g47060 (365 aa).

The interval 18 to 48 (DYGGRHNQAKHFPPGNDARHHQASETAQKGP) is disordered. The Protein kinase domain occupies 73–353 (FGSNSLIGEG…IVVKALQPLL (281 aa)). ATP-binding positions include 79–87 (IGEGSYGRV) and Lys101. Tyr145 is subject to Phosphotyrosine. The active-site Proton acceptor is the Asp203. A phosphoserine mark is found at Ser207 and Ser237. Residues Thr238 and Thr243 each carry the phosphothreonine modification. Position 251 is a phosphotyrosine (Tyr251).

The protein belongs to the protein kinase superfamily. Ser/Thr protein kinase family.

It catalyses the reaction L-seryl-[protein] + ATP = O-phospho-L-seryl-[protein] + ADP + H(+). The enzyme catalyses L-threonyl-[protein] + ATP = O-phospho-L-threonyl-[protein] + ADP + H(+). In Arabidopsis thaliana (Mouse-ear cress), this protein is Probable receptor-like protein kinase At2g47060.